A 100-amino-acid polypeptide reads, in one-letter code: NADH-quinone oxidoreductase subunit K (100 aa).

Helical transmembrane passes span 4-24 (LSNY…GVLT), 29-49 (IVVF…FVAF), and 60-80 (IFVF…LALF).

It belongs to the complex I subunit 4L family. In terms of assembly, NDH-1 is composed of 14 different subunits. Subunits NuoA, H, J, K, L, M, N constitute the membrane sector of the complex.

It localises to the cell inner membrane. It carries out the reaction a quinone + NADH + 5 H(+)(in) = a quinol + NAD(+) + 4 H(+)(out). In terms of biological role, NDH-1 shuttles electrons from NADH, via FMN and iron-sulfur (Fe-S) centers, to quinones in the respiratory chain. The immediate electron acceptor for the enzyme in this species is believed to be ubiquinone. Couples the redox reaction to proton translocation (for every two electrons transferred, four hydrogen ions are translocated across the cytoplasmic membrane), and thus conserves the redox energy in a proton gradient. This chain is NADH-quinone oxidoreductase subunit K, found in Trichlorobacter lovleyi (strain ATCC BAA-1151 / DSM 17278 / SZ) (Geobacter lovleyi).